A 104-amino-acid polypeptide reads, in one-letter code: Urease subunit beta (104 aa).

This sequence belongs to the urease beta subunit family. In terms of assembly, heterotrimer of UreA (gamma), UreB (beta) and UreC (alpha) subunits. Three heterotrimers associate to form the active enzyme.

It localises to the cytoplasm. The enzyme catalyses urea + 2 H2O + H(+) = hydrogencarbonate + 2 NH4(+). It participates in nitrogen metabolism; urea degradation; CO(2) and NH(3) from urea (urease route): step 1/1. The chain is Urease subunit beta from Methylocella silvestris (strain DSM 15510 / CIP 108128 / LMG 27833 / NCIMB 13906 / BL2).